The sequence spans 896 residues: MTEESEETVLYIEHRYVCSECNQLYGSLEEVLMHQNSHVPQQHFELVGVADPGVTVAAEAASGTGLYQTLVQESQYQCLECGQLLMSPSQLLEHQELHLKMMAPQEAVPAEPPPKAPALSSSTIHYECVDCKALFASQELWLNHRQTHLRATPTKPPTPVVLGSPVVVGSPVGQTRVAVEHSYRKAEEGGEGAAVPSAAATTTEVVTEVELLLYKCSECSQLFQLPADFLEHQATHFPAPAPESEEPVLQQETLTPAPVEVPVSQPEPVPSSDHSYELRNGEALGRDRRGRRARRNNSGEPGGAATQELFCSACDQLFLSPHQLQQHLRSHREGVFKCPLCSRVFPSPSSLDQHLGDHSSESHFLCVDCGLAFGTEALLLAHRRAHTPNPLHSCPCGKTFVNLTKFLYHRRTHGVGGVPLPTTPVPPEEPVLGFPEPAPAETGEPEAPEPPVAEESSAEPAAPGTYRCLLCSREFGKALQLTRHQRFVHRLERRHKCSICGKMFKKKSHVRNHLRTHTGERPFPCPDCSKPFNSPANLARHRLTHTGERPYRCGDCGKAFTQSSTLRQHRLVHAQHFPYRCQECGVRFHRPYRLLMHRYHHTGEYPYKCRECPRSFLLRRLLEVHQLVAHAGRQPHRCSSCGAAFPSSLRLREHRCAAAAAQAPRRFECGTCGKKVGSAARLQAHEAAHAAAGPGEVLAKEPPAPRAPRAARTPITSPTTLGSAAPAAPAAPARRRGLECSECKKLFSTETSLQVHRRIHTGERPYPCPDCGKAFRQSTHLKDHRRLHTGERPFACEVCGKAFAISMRLAEHRRIHTGERPYSCPDCGKSYRSFSNLWKHRKTHQQQHQAAVRQQLAEAEAAVGLAVMETAVEALPLVEAIEIYPLAEAEGVQISG.

C2H2-type zinc fingers lie at residues 16 to 38 (YVCSECNQLYGSLEEVLMHQNSH), 76 to 98 (YQCLECGQLLMSPSQLLEHQELH), and 126 to 148 (YECVDCKALFASQELWLNHRQTH). A Phosphoserine modification is found at S164. The segment at 214-236 (YKCSECSQLFQLPADFLEHQATH) adopts a C2H2-type 4 zinc-finger fold. The span at 259–272 (VEVPVSQPEPVPSS) shows a compositional bias: low complexity. The interval 259-303 (VEVPVSQPEPVPSSDHSYELRNGEALGRDRRGRRARRNNSGEPGG) is disordered. The span at 274–287 (HSYELRNGEALGRD) shows a compositional bias: basic and acidic residues. S298 is modified (phosphoserine). C2H2-type zinc fingers lie at residues 309–331 (LFCSACDQLFLSPHQLQQHLRSH), 336–358 (FKCPLCSRVFPSPSSLDQHLGDH), 364–386 (FLCVDCGLAFGTEALLLAHRRAH), and 392–413 (HSCPCGKTFVNLTKFLYHRRTH). A disordered region spans residues 434 to 460 (FPEPAPAETGEPEAPEPPVAEESSAEP). C2H2-type zinc fingers lie at residues 466–489 (YRCLLCSREFGKALQLTRHQRFVH), 495–517 (HKCSICGKMFKKKSHVRNHLRTH), 523–545 (FPCPDCSKPFNSPANLARHRLTH), 551–573 (YRCGDCGKAFTQSSTLRQHRLVH), 579–601 (YRCQECGVRFHRPYRLLMHRYHH), and 607–630 (YKCRECPRSFLLRRLLEVHQLVAH). Residues 636-659 (HRCSSCGAAFPSSLRLREHRCAAA) form a C2H2-type 15; degenerate zinc finger. The C2H2-type 16 zinc-finger motif lies at 667–689 (FECGTCGKKVGSAARLQAHEAAH). Residues 687 to 733 (AAHAAAGPGEVLAKEPPAPRAPRAARTPITSPTTLGSAAPAAPAAPA) form a disordered region. Positions 707 to 732 (APRAARTPITSPTTLGSAAPAAPAAP) are enriched in low complexity. Phosphoserine is present on S717. 4 consecutive C2H2-type zinc fingers follow at residues 738–760 (LECSECKKLFSTETSLQVHRRIH), 766–788 (YPCPDCGKAFRQSTHLKDHRRLH), 794–816 (FACEVCGKAFAISMRLAEHRRIH), and 822–844 (YSCPDCGKSYRSFSNLWKHRKTH). At R832 the chain carries Asymmetric dimethylarginine.

Belongs to the krueppel C2H2-type zinc-finger protein family.

It is found in the nucleus. Functionally, may be involved in transcriptional regulation. The sequence is that of Zinc finger protein 574 (ZNF574) from Bos taurus (Bovine).